Reading from the N-terminus, the 239-residue chain is Large ribosomal subunit protein uL1 (239 aa).

This sequence belongs to the universal ribosomal protein uL1 family. Part of the 50S ribosomal subunit.

Binds directly to 23S rRNA. The L1 stalk is quite mobile in the ribosome, and is involved in E site tRNA release. In terms of biological role, protein L1 is also a translational repressor protein, it controls the translation of the L11 operon by binding to its mRNA. This chain is Large ribosomal subunit protein uL1, found in Rickettsia conorii (strain ATCC VR-613 / Malish 7).